The primary structure comprises 968 residues: Alanine--tRNA ligase, cytoplasmic (968 aa).

N-acetylmethionine is present on M1. Residues R77, H95, W176, and 214-216 (IWN) contribute to the ATP site. N216 and D239 together coordinate L-alanine. An ATP-binding site is contributed by G243. Phosphoserine is present on residues S399 and S555. H605, H609, C723, and H727 together coordinate Zn(2+). A Nuclear localization signal motif is present at residues 750-763 (RRIVAVTGAEAQKA). K876 carries the N6-acetyllysine modification. K943 carries the post-translational modification N6,N6,N6-trimethyllysine; alternate. N6,N6-dimethyllysine; alternate is present on K943. At K943 the chain carries N6-methyllysine; alternate.

The protein belongs to the class-II aminoacyl-tRNA synthetase family. As to quaternary structure, monomer. Interacts with ANKRD16; the interaction is direct. Zn(2+) serves as cofactor. In terms of processing, ISGylated. Methylation at 'Lys-943' by METTL21C.

It localises to the cytoplasm. The protein resides in the nucleus. The enzyme catalyses tRNA(Ala) + L-alanine + ATP = L-alanyl-tRNA(Ala) + AMP + diphosphate. It carries out the reaction (S)-lactate + ATP + H(+) = (S)-lactoyl-AMP + diphosphate. The catalysed reaction is (S)-lactoyl-AMP + L-lysyl-[protein] = N(6)-[(S)-lactoyl]-L-lysyl-[protein] + AMP + 2 H(+). The protein lactyltransferase activity is inhibited by beta-alanine. In terms of biological role, catalyzes the attachment of alanine to tRNA(Ala) in a two-step reaction: alanine is first activated by ATP to form Ala-AMP and then transferred to the acceptor end of tRNA(Ala). Also edits incorrectly charged tRNA(Ala) via its editing domain. In presence of high levels of lactate, also acts as a protein lactyltransferase that mediates lactylation of lysine residues in target proteins, such as TEAD1, TP53/p53 and YAP1. Protein lactylation takes place in a two-step reaction: lactate is first activated by ATP to form lactate-AMP and then transferred to lysine residues of target proteins. Acts as an inhibitor of TP53/p53 activity by catalyzing lactylation of TP53/p53. Acts as a positive regulator of the Hippo pathway by mediating lactylation of TEAD1 and YAP1. The chain is Alanine--tRNA ligase, cytoplasmic from Mus musculus (Mouse).